We begin with the raw amino-acid sequence, 127 residues long: Small ribosomal subunit protein eS8 (127 aa).

Positions 1–33 (MAIWQGKSMKKPSGGRAKMNRGKRKYELGREPA) are disordered.

The protein belongs to the eukaryotic ribosomal protein eS8 family. In terms of assembly, part of the 30S ribosomal subunit.

This Methanothermobacter thermautotrophicus (strain ATCC 29096 / DSM 1053 / JCM 10044 / NBRC 100330 / Delta H) (Methanobacterium thermoautotrophicum) protein is Small ribosomal subunit protein eS8 (rps8e).